We begin with the raw amino-acid sequence, 548 residues long: C-type lectin domain family 4 member F (548 aa).

The Cytoplasmic segment spans residues 1–42; sequence MKEAELNRDMARYCTDNQCVSLQPQGLGPKSAALMAPRTLRH. The helical; Signal-anchor for type II membrane protein transmembrane segment at 43 to 69 threads the bilayer; sequence VQVILALMVVTVIFSLLALFVVASQPW. The Extracellular segment spans residues 70 to 548; that stretch reads RPEWNKEPPS…STGWSAARVG (479 aa). Residues Asn-86, Asn-92, Asn-115, Asn-132, Asn-209, and Asn-255 are each glycosylated (N-linked (GlcNAc...) asparagine). A C-type lectin domain is found at 438–538; the sequence is KFCTSQGAHL…GSSYPWVCKK (101 aa). 2 disulfides stabilise this stretch: Cys-440-Cys-536 and Cys-516-Cys-528.

As to expression, kupffer cells.

It is found in the membrane. In terms of biological role, receptor with an affinity for galactose and fucose. Could be involved in endocytosis. This is C-type lectin domain family 4 member F (Clec4f) from Mus musculus (Mouse).